We begin with the raw amino-acid sequence, 323 residues long: CYFIP-related Rac1 interactor A (323 aa).

Belongs to the CYRI family. Interacts with RAC1 (GTP-bound form preferentially).

The protein localises to the membrane. In terms of biological role, may negatively regulate RAC1 signaling and RAC1-driven cytoskeletal remodeling. May regulate chemotaxis, cell migration and epithelial polarization by controlling the polarity, plasticity, duration and extent of protrusions. This chain is CYFIP-related Rac1 interactor A (CYRIA), found in Bos taurus (Bovine).